An 805-amino-acid chain; its full sequence is Phenylalanine--tRNA ligase beta subunit (805 aa).

The 123-residue stretch at 40–162 (FKNPDYLQLG…NRDEFGDYLS (123 aa)) folds into the tRNA-binding domain. The 75-residue stretch at 412–486 (AFNRKIYLNF…KILDLNKIKE (75 aa)) folds into the B5 domain. Mg(2+)-binding residues include Asp464, Asp470, Glu473, and Glu474.

This sequence belongs to the phenylalanyl-tRNA synthetase beta subunit family. Type 1 subfamily. In terms of assembly, tetramer of two alpha and two beta subunits. Requires Mg(2+) as cofactor.

It localises to the cytoplasm. It catalyses the reaction tRNA(Phe) + L-phenylalanine + ATP = L-phenylalanyl-tRNA(Phe) + AMP + diphosphate + H(+). The polypeptide is Phenylalanine--tRNA ligase beta subunit (pheT) (Mycoplasma pneumoniae (strain ATCC 29342 / M129 / Subtype 1) (Mycoplasmoides pneumoniae)).